A 306-amino-acid polypeptide reads, in one-letter code: Homeobox protein Hox-C13a (306 aa).

The segment at residues 236 to 295 (GRKKRVPYTKIQLKELEKEYAASKFITKDKRRRISATTNLSERQVTIWFQNRRVKEKKFV) is a DNA-binding region (homeobox).

This sequence belongs to the Abd-B homeobox family.

The protein resides in the nucleus. Functionally, sequence-specific transcription factor which is part of a developmental regulatory system that provides cells with specific positional identities on the anterior-posterior axis. The sequence is that of Homeobox protein Hox-C13a (hoxc13a) from Danio rerio (Zebrafish).